The following is a 149-amino-acid chain: UPF0260 protein Avin_32930 (149 aa).

Belongs to the UPF0260 family.

This chain is UPF0260 protein Avin_32930, found in Azotobacter vinelandii (strain DJ / ATCC BAA-1303).